We begin with the raw amino-acid sequence, 227 residues long: Cytidylate kinase (227 aa).

12-20 contributes to the ATP binding site; the sequence is GPGGAGKGT.

Belongs to the cytidylate kinase family. Type 1 subfamily.

Its subcellular location is the cytoplasm. The catalysed reaction is CMP + ATP = CDP + ADP. It catalyses the reaction dCMP + ATP = dCDP + ADP. In Klebsiella pneumoniae (strain 342), this protein is Cytidylate kinase.